Reading from the N-terminus, the 204-residue chain is Small heat shock protein, chloroplastic (204 aa).

Residues 34-55 (QMGRVDHDHELDDRSNRAPISR) form a disordered region. A compositionally biased stretch (basic and acidic residues) spans 37-49 (RVDHDHELDDRSN). A sHSP domain is found at 98–204 (GSGRAMRRGW…KKDVFQVMVD (107 aa)).

It belongs to the small heat shock protein (HSP20) family.

The protein localises to the plastid. It is found in the chloroplast stroma. The sequence is that of Small heat shock protein, chloroplastic (HSP23) from Oxybasis rubra (Red goosefoot).